The sequence spans 89 residues: Small ribosomal subunit protein uS15 (89 aa).

The protein belongs to the universal ribosomal protein uS15 family. Part of the 30S ribosomal subunit. Forms a bridge to the 50S subunit in the 70S ribosome, contacting the 23S rRNA.

Its function is as follows. One of the primary rRNA binding proteins, it binds directly to 16S rRNA where it helps nucleate assembly of the platform of the 30S subunit by binding and bridging several RNA helices of the 16S rRNA. Functionally, forms an intersubunit bridge (bridge B4) with the 23S rRNA of the 50S subunit in the ribosome. The protein is Small ribosomal subunit protein uS15 of Orientia tsutsugamushi (strain Ikeda) (Rickettsia tsutsugamushi).